We begin with the raw amino-acid sequence, 399 residues long: Centrosomal protein 43 (399 aa).

One can recognise a LisH domain in the interval 70-102 (DGRLVASLVAEFLQFFNLDFTLAVFQPETSTFQ). At threonine 143 the chain carries Phosphothreonine. Residues 143–311 (TSGEGALDLS…LKESESKRGN (169 aa)) form a disordered region. A phosphoserine mark is found at serine 152, serine 156, serine 160, and serine 202. Over residues 197–209 (NDASHSDTSISSS) the composition is skewed to low complexity. Positions 245–256 (PEEDDLEGDSFF) are enriched in acidic residues. Positions 286–302 (APPLKSGLSSLAGAPSL) are enriched in low complexity. 2 positions are modified to phosphoserine: serine 301 and serine 326. The tract at residues 328 to 357 (GLGTGEEDDYVDDFNSTSHRSEKSELSIGE) is disordered. Phosphotyrosine is present on tyrosine 337.

Belongs to the CEP43 family. Homodimer. Part of a ternary complex that contains CEP350, CEP43 and MAPRE1. Interacts directly with CEP350 and MAPRE1. Interacts with CEP19. Interacts (via N-terminus) with CEP350 (via C-terminus).

Its subcellular location is the cytoplasm. It is found in the cytoskeleton. The protein resides in the microtubule organizing center. It localises to the centrosome. The protein localises to the centriole. Its subcellular location is the cilium basal body. Required for anchoring microtubules to the centrosomes. Required for ciliation. The protein is Centrosomal protein 43 (CEP43) of Bos taurus (Bovine).